Here is a 491-residue protein sequence, read N- to C-terminus: Probable cytosol aminopeptidase (491 aa).

Lys263 and Asp268 together coordinate Mn(2+). Lys275 is an active-site residue. 3 residues coordinate Mn(2+): Asp286, Asp345, and Glu347. The active site involves Arg349.

Belongs to the peptidase M17 family. The cofactor is Mn(2+).

Its subcellular location is the cytoplasm. The enzyme catalyses Release of an N-terminal amino acid, Xaa-|-Yaa-, in which Xaa is preferably Leu, but may be other amino acids including Pro although not Arg or Lys, and Yaa may be Pro. Amino acid amides and methyl esters are also readily hydrolyzed, but rates on arylamides are exceedingly low.. It catalyses the reaction Release of an N-terminal amino acid, preferentially leucine, but not glutamic or aspartic acids.. In terms of biological role, presumably involved in the processing and regular turnover of intracellular proteins. Catalyzes the removal of unsubstituted N-terminal amino acids from various peptides. This chain is Probable cytosol aminopeptidase, found in Haemophilus influenzae (strain PittEE).